The following is a 354-amino-acid chain: Uroporphyrinogen decarboxylase (354 aa).

Substrate contacts are provided by residues 25–29 (RQAGR), Asp75, Tyr152, Thr207, and His330.

Belongs to the uroporphyrinogen decarboxylase family. Homodimer.

The protein resides in the cytoplasm. It catalyses the reaction uroporphyrinogen III + 4 H(+) = coproporphyrinogen III + 4 CO2. The protein operates within porphyrin-containing compound metabolism; protoporphyrin-IX biosynthesis; coproporphyrinogen-III from 5-aminolevulinate: step 4/4. Its function is as follows. Catalyzes the decarboxylation of four acetate groups of uroporphyrinogen-III to yield coproporphyrinogen-III. The sequence is that of Uroporphyrinogen decarboxylase from Xanthomonas oryzae pv. oryzae (strain MAFF 311018).